Consider the following 491-residue polypeptide: Ran-binding protein 3 (491 aa).

Positions 1 to 10 (MADLANEEKP) are enriched in basic and acidic residues. 2 disordered regions span residues 1–177 (MADL…HCEE) and 255–292 (VLSP…KKES). The residue at position 2 (A2) is an N-acetylalanine. K9 and K21 each carry N6-acetyllysine. 3 positions are modified to phosphoserine: S32, S33, and S40. The Nuclear localization signal motif lies at 49-57 (PPVKRERTS). The span at 51–67 (VKRERTSSLTHSEEKSS) shows a compositional bias: basic and acidic residues. T56 is modified (phosphothreonine). S58 carries the phosphoserine modification. Composition is skewed to polar residues over residues 111 to 124 (VLSQ…TNGV) and 133 to 149 (PATS…SPSE). Phosphoserine is present on S146. Basic and acidic residues predominate over residues 152–162 (EETHTLEEKVP). A phosphoserine mark is found at S257, S277, S279, and S296. Positions 275–286 (AQSGSESSSQEA) are enriched in low complexity. The RanBD1 domain maps to 302 to 442 (KATAWTCLLE…LALRSRAEQE (141 aa)). Positions 438 to 491 (RAEQEQEAKAPPPEPGATRATEEEDSDEDAVLAPSGVTGAGTGDEGDGQAPGST) are disordered. S463 carries the phosphoserine modification.

Interacts with CHC1 in a Ran-stimulated manner. Interacts with XPO1. Interacts (via its C-terminal R domain) with SMAD2 (dephosphorylated form via its MH1 and MH2 domains); the interaction results in the nuclear export of SMAD2 and termination of the TGF-beta signaling. Interacts (via its C-terminal R domain) with SMAD3 (dephosphorylated form via its MH1 domain); the interaction results in the nuclear export of SMAD3 and termination of the TGF-beta signaling. Phosphorylation at Ser-58 promotes its import into the nucleus.

Its subcellular location is the cytoplasm. It is found in the nucleus. Acts as a cofactor for XPO1/CRM1-mediated nuclear export, perhaps as export complex scaffolding protein. Bound to XPO1/CRM1, stabilizes the XPO1/CRM1-cargo interaction. In the absence of Ran-bound GTP prevents binding of XPO1/CRM1 to the nuclear pore complex. Binds to CHC1/RCC1 and increases the guanine nucleotide exchange activity of CHC1/RCC1. Recruits XPO1/CRM1 to CHC1/RCC1 in a Ran-dependent manner. Negative regulator of TGF-beta signaling through interaction with the R-SMAD proteins, SMAD2 and SMAD3, and mediating their nuclear export. The sequence is that of Ran-binding protein 3 (Ranbp3) from Mus musculus (Mouse).